Here is a 249-residue protein sequence, read N- to C-terminus: Testis-expressed protein 101 (249 aa).

An N-terminal signal peptide occupies residues 1-25 (MGTPRIQHLLILLVLGASLLTSGLE). N-linked (GlcNAc...) asparagine glycans are attached at residues Asn45 and Asn159. In terms of domain architecture, UPAR/Ly6 spans 140–211 (CPTCVALGTC…PMFVREACPH (72 aa)). Residue Asn222 is the site of GPI-anchor amidated asparagine attachment. The propeptide at 223–249 (GATCLPIPVWGLQLLLPLLLPSFIHFS) is removed in mature form.

Interacts with VAMP3. Interacts with LY6K. Interacts with DPEP3; co-localized on the cell surface of spermatocytes, spermatids, and testicular spermatozoa, co-localized only in cytoplasmic droplets of caput and corpus epididymal sperm. Interacts with ADAM5. N-glycosylated; by high mannose and/or biantennary complex and/or certain types of hybrid oligosaccharides; possesses different oligosaccharides chains according to its subcellular localization in the testis. In terms of processing, sheds from membrane raft by ACE and released from the cell surface of epididymal sperm while it passes through the caput epididymis leading to disappearance of TEX101 on spermatozoa; is essential to produce fertile spermatozoa. As to expression, detected in testis and spermatogonia. Not detected in spermatocytes. Detected in blood leukocytes.

Its subcellular location is the cell membrane. The protein localises to the membrane raft. It is found in the cytoplasmic vesicle. It localises to the secretory vesicle. The protein resides in the acrosome. Its subcellular location is the secreted. Functionally, plays a role in fertilization by controlling binding of sperm to zona pellucida and migration of spermatozoa into the oviduct. May play a role in signal transduction and promote protein tyrosine phosphorylation. The sequence is that of Testis-expressed protein 101 from Homo sapiens (Human).